A 172-amino-acid chain; its full sequence is NADH-ubiquinone oxidoreductase chain 6 (172 aa).

The next 6 helical transmembrane spans lie at 1–21 (MLSL…VVVL), 25–45 (PYFS…IVLY), 48–68 (GTFL…VVFV), 86–106 (VIWF…MSFN), 108–128 (FFLD…IFGA), and 141–161 (LILV…LVVV).

Belongs to the complex I subunit 6 family.

The protein localises to the mitochondrion membrane. The catalysed reaction is a ubiquinone + NADH + 5 H(+)(in) = a ubiquinol + NAD(+) + 4 H(+)(out). Its function is as follows. Core subunit of the mitochondrial membrane respiratory chain NADH dehydrogenase (Complex I) that is believed to belong to the minimal assembly required for catalysis. Complex I functions in the transfer of electrons from NADH to the respiratory chain. The immediate electron acceptor for the enzyme is believed to be ubiquinone. In Petromyzon marinus (Sea lamprey), this protein is NADH-ubiquinone oxidoreductase chain 6 (MT-ND6).